The following is a 550-amino-acid chain: Proteasome-associated ATPase (550 aa).

The stretch at 9–48 (EELARRVASLSAQNERLAQILVEARSKIVGLQQQIDDLAQ) forms a coiled coil. Residue 233 to 238 (GCGKTL) coordinates ATP. A disordered region spans residues 528-550 (KGEGKNPTPAKAIETPHNTGPYL). The interval 549-550 (YL) is docks into pockets in the proteasome alpha-ring.

The protein belongs to the AAA ATPase family. In terms of assembly, homohexamer. Assembles into a hexameric ring structure that caps the 20S proteasome core. Strongly interacts with the prokaryotic ubiquitin-like protein Pup through a hydrophobic interface; the interacting region of ARC lies in its N-terminal coiled-coil domain. There is one Pup binding site per ARC hexamer ring. Upon ATP-binding, the C-terminus of ARC interacts with the alpha-rings of the proteasome core, possibly by binding to the intersubunit pockets.

The protein operates within protein degradation; proteasomal Pup-dependent pathway. ATPase which is responsible for recognizing, binding, unfolding and translocation of pupylated proteins into the bacterial 20S proteasome core particle. May be essential for opening the gate of the 20S proteasome via an interaction with its C-terminus, thereby allowing substrate entry and access to the site of proteolysis. Thus, the C-termini of the proteasomal ATPase may function like a 'key in a lock' to induce gate opening and therefore regulate proteolysis. The chain is Proteasome-associated ATPase from Jonesia denitrificans (strain ATCC 14870 / DSM 20603 / BCRC 15368 / CIP 55.134 / JCM 11481 / NBRC 15587 / NCTC 10816 / Prevot 55134) (Listeria denitrificans).